Here is a 227-residue protein sequence, read N- to C-terminus: 7-cyano-7-deazaguanine synthase (227 aa).

Residue 7 to 17 coordinates ATP; sequence VSGGMDSLVAT. Cysteine 187, cysteine 195, cysteine 198, and cysteine 201 together coordinate Zn(2+).

It belongs to the QueC family. Requires Zn(2+) as cofactor.

It catalyses the reaction 7-carboxy-7-deazaguanine + NH4(+) + ATP = 7-cyano-7-deazaguanine + ADP + phosphate + H2O + H(+). It functions in the pathway purine metabolism; 7-cyano-7-deazaguanine biosynthesis. Functionally, catalyzes the ATP-dependent conversion of 7-carboxy-7-deazaguanine (CDG) to 7-cyano-7-deazaguanine (preQ(0)). The polypeptide is 7-cyano-7-deazaguanine synthase (Chlorobaculum parvum (strain DSM 263 / NCIMB 8327) (Chlorobium vibrioforme subsp. thiosulfatophilum)).